The primary structure comprises 426 residues: Cytochrome c biogenesis protein CcsB (426 aa).

The next 3 helical transmembrane spans lie at 11-31 (LRVAIVLLFLIALASAVGTAI), 69-89 (SVWFLSLLAWLGLALILCSWR), and 159-179 (VGPLLVHTGLILLMLGAVWGV).

The protein belongs to the Ccs1/CcsB family. As to quaternary structure, may interact with CcsA.

It is found in the cellular thylakoid membrane. In terms of biological role, required during biogenesis of c-type cytochromes (cytochrome c6 and cytochrome f) at the step of heme attachment. This chain is Cytochrome c biogenesis protein CcsB, found in Synechococcus sp. (strain CC9902).